The sequence spans 263 residues: Small ribosomal subunit protein eS4 (263 aa).

Residues 42-104 enclose the S4 RNA-binding domain; that stretch reads LPLIIFLRNR…TGENFRLIYD (63 aa).

The protein belongs to the eukaryotic ribosomal protein eS4 family.

The polypeptide is Small ribosomal subunit protein eS4 (RPS4) (Bos taurus (Bovine)).